A 47-amino-acid chain; its full sequence is Variabilin (47 aa).

A Cell attachment site motif is present at residues 32–34 (RGD).

Contains 2 disulfide bonds. Expressed in salivary glands.

It is found in the secreted. Its function is as follows. Potently inhibits platelet aggregation induced by ADP (IC(50)=157 nM, complete inhibition at 514 nM). Also inhibits platelet aggregation induced by collagen and by the thrombin receptor peptide SFLLRNP. Is a potent antagonist of the fibrinogen receptor glycoprotein IIb-IIIa (ITGA2B/ITGB3) and the vitronectin receptor alpha-v/beta-3 (ITGAV/ITGB3). This chain is Variabilin, found in Dermacentor variabilis (American dog tick).